A 78-amino-acid chain; its full sequence is MAKAAVRKPKKKVCVFCKDKVDYIDFKDTSLLRKYISDRGKIRARRVSGNCSQHQRDVATAVKNSREMALLPYTASAR.

It belongs to the bacterial ribosomal protein bS18 family. Part of the 30S ribosomal subunit. Forms a tight heterodimer with protein bS6.

Binds as a heterodimer with protein bS6 to the central domain of the 16S rRNA, where it helps stabilize the platform of the 30S subunit. The sequence is that of Small ribosomal subunit protein bS18 from Frankia casuarinae (strain DSM 45818 / CECT 9043 / HFP020203 / CcI3).